The following is an 81-amino-acid chain: Photosystem I iron-sulfur center (81 aa).

4Fe-4S ferredoxin-type domains lie at 2–31 (SHSVKIYDTCIGCTQCVRACPLDVLEMVPW) and 37–68 (GQIASSPRTEDCVGCKRCETACPTDFLSIRVY). Residues Cys11, Cys14, Cys17, Cys21, Cys48, Cys51, Cys54, and Cys58 each contribute to the [4Fe-4S] cluster site.

In terms of assembly, the cyanobacterial PSI reaction center is composed of one copy each of PsaA,B,C,D,E,F,I,J,K,L,M and X, and forms trimeric complexes. It depends on [4Fe-4S] cluster as a cofactor.

It localises to the cellular thylakoid membrane. It catalyses the reaction reduced [plastocyanin] + hnu + oxidized [2Fe-2S]-[ferredoxin] = oxidized [plastocyanin] + reduced [2Fe-2S]-[ferredoxin]. Its function is as follows. Apoprotein for the two 4Fe-4S centers FA and FB of photosystem I (PSI); essential for photochemical activity. FB is the terminal electron acceptor of PSI, donating electrons to ferredoxin. The C-terminus interacts with PsaA/B/D and helps assemble the protein into the PSI complex. Required for binding of PsaD and PsaE to PSI. PSI is a plastocyanin/cytochrome c6-ferredoxin oxidoreductase, converting photonic excitation into a charge separation, which transfers an electron from the donor P700 chlorophyll pair to the spectroscopically characterized acceptors A0, A1, FX, FA and FB in turn. The protein is Photosystem I iron-sulfur center of Synechococcus sp. (strain RCC307).